The chain runs to 457 residues: Dihydrolipoyl dehydrogenase (457 aa).

FAD-binding positions include 32 to 40, Lys-49, and Ala-113; that span reads EKQYFGGVC. Cys-40 and Cys-45 are disulfide-bonded. Residues 178-182, Val-235, and 262-265 each bind NAD(+); these read GGGVI and SIGR. FAD contacts are provided by Asp-303 and Ala-311. His-437 functions as the Proton acceptor in the catalytic mechanism.

The protein belongs to the class-I pyridine nucleotide-disulfide oxidoreductase family. As to quaternary structure, homodimer. FAD serves as cofactor.

The protein resides in the cytoplasm. It catalyses the reaction N(6)-[(R)-dihydrolipoyl]-L-lysyl-[protein] + NAD(+) = N(6)-[(R)-lipoyl]-L-lysyl-[protein] + NADH + H(+). Functionally, lipoamide dehydrogenase is a component of the alpha-ketoacid dehydrogenase complexes. The sequence is that of Dihydrolipoyl dehydrogenase (pdhD) from Mycoplasma genitalium (strain ATCC 33530 / DSM 19775 / NCTC 10195 / G37) (Mycoplasmoides genitalium).